Here is a 451-residue protein sequence, read N- to C-terminus: CDP-diacylglycerol--serine O-phosphatidyltransferase PssA (451 aa).

2 consecutive PLD phosphodiesterase domains span residues 27 to 224 (VDFF…ELRD) and 239 to 451 (SVTP…SRIL). Residues leucine 56, tyrosine 57, arginine 91, arginine 94, arginine 96, isoleucine 97, glutamate 132, alanine 133, valine 136, histidine 138, lysine 140, glycine 152, tyrosine 159, and arginine 167 each contribute to the a CDP-1,2-diacyl-sn-glycerol site. The active site involves histidine 138. The active site involves aspartate 169. A CDP-1,2-diacyl-sn-glycerol-binding residues include tyrosine 273, aspartate 305, phenylalanine 306, isoleucine 316, isoleucine 317, leucine 320, leucine 323, and tyrosine 324. Histidine 357 is an active-site residue. The a CDP-1,2-diacyl-sn-glycerol site is built by lysine 359, asparagine 374, and arginine 378. Glutamate 385 is an active-site residue. A CDP-1,2-diacyl-sn-glycerol is bound by residues leucine 438, isoleucine 447, isoleucine 450, and leucine 451.

Belongs to the CDP-alcohol phosphatidyltransferase class-II family. Multimeric. Interacts with ACP, YbgC and PlsB, forming altogether a complex at the inner membrane. Monomeric and dimeric; existing in equilibrium, but the monomer probably exhibits preferential membrane association.

Its subcellular location is the cytoplasm. It localises to the cell inner membrane. The catalysed reaction is a CDP-1,2-diacyl-sn-glycerol + L-serine = a 1,2-diacyl-sn-glycero-3-phospho-L-serine + CMP + H(+). Its pathway is phospholipid metabolism; phosphatidylethanolamine biosynthesis; phosphatidylethanolamine from CDP-diacylglycerol: step 1/2. Its function is as follows. Catalyzes the conversion of cytidine diphosphate diacylglycerol (CDP-DG) and L-serine into phosphatidylserine. Essential for biosynthesis of phosphatidylethanolamine, one of the major membrane phospholipids. Phosphatidylserine is later converted into phosphatidylethanolamine via the action of phosphatidylserine decarboxylase psd. Associates with the bacterial membrane for its role, which depends on the levels of anionic phospholipids in the membrane. The protein is CDP-diacylglycerol--serine O-phosphatidyltransferase PssA (pssA) of Escherichia coli (strain K12).